The primary structure comprises 614 residues: Nuclear receptor subfamily 1 group D member 1 (614 aa).

A compositionally biased stretch (polar residues) spans 1-48 (MTTLDSNNNTGGVITYIGSSGSSPNRTSPESLYSDSSNGSFQSLTQGC). The interval 1–70 (MTTLDSNNNT…TQDPARSFGS (70 aa)) is required for phosphorylation by CSNK1E and cytoplasmic localization. Residues 1 to 120 (MTTLDSNNNT…GNRVSPSKST (120 aa)) form a disordered region. Residues 1-129 (MTTLDSNNNT…TSNITKLNGM (129 aa)) are modulating. Residues 49–285 (PTYFPPSPTG…PPRSPSPEPT (237 aa)) form a crucial for activation of GJA1 region. Phosphoserine; by GSK3-beta is present on residues serine 55 and serine 59. Low complexity predominate over residues 69-103 (GSIPPSLGDDGSPSSSSSSSSSSSSSFYNGSPPGG). The nuclear receptor DNA-binding region spans 130-206 (VLLCKVCGDV…VGMSRDAVRF (77 aa)). 2 NR C4-type zinc fingers span residues 133–153 (CKVCGDVASGFHYGVHACEGC) and 170–194 (CLKNENCSIVRINRNRCQQCRFKKC). 2 positions are modified to N6-acetyllysine; by KAT5: lysine 192 and lysine 193. The disordered stretch occupies residues 233–286 (SSQCPLETPPTQHPTPGPMGPSPPPAPAPSPLVGFSQFPQQLTPPRSPSPEPTV). Positions 239-262 (ETPPTQHPTPGPMGPSPPPAPAPS) are enriched in pro residues. The residue at position 275 (threonine 275) is a Phosphothreonine; by CDK1. One can recognise an NR LBD domain in the interval 285-614 (TVEDVISQVA…KLLSFRVDAQ (330 aa)). Residue cysteine 418 participates in heme binding. Residue lysine 591 is modified to N6-acetyllysine. Histidine 602 provides a ligand contact to heme.

It belongs to the nuclear hormone receptor family. NR1 subfamily. In terms of assembly, binds DNA as a monomer or a homodimer. Interacts with C1D, NR2E3, SP1 and ZNHIT1. Interacts with OPHN1 (via C-terminus). Interacts with PER2; the interaction associates PER2 to BMAL1 promoter region. Interacts with CRY1. Interacts with CCAR2. Interacts with SIAH2. Interacts with FBXW7 and CDK1. Interacts with HUWE1. Interacts with NR0B2. Interacts with NFIL3. Interacts (via domain NR LBD) with HSP90AA1 and HSP90AB1. Post-translationally, ubiquitinated, leading to its proteasomal degradation. Ubiquitinated by the SCF(FBXW7) complex when phosphorylated by CDK1 leading to its proteasomal degradation. Ubiquitinated by SIAH2; leading to its proteasomal degradation. Rapidly ubiquitinated in response to inflammatory triggers and sumoylation is a prerequisite to its ubiquitination. Sumoylated by UBE2I, desumoylated by SENP1, and sumoylation is a prerequisite to its ubiquitination. In terms of processing, phosphorylated by CSNK1E; phosphorylation enhances its cytoplasmic localization. Post-translationally, undergoes lysosome-mediated degradation in a time-dependent manner in the liver. Expressed in all tissues and cell lines examined. Expressed at high levels in some squamous carcinoma cell lines.

It is found in the nucleus. The protein resides in the cytoplasm. The protein localises to the cell projection. Its subcellular location is the dendrite. It localises to the dendritic spine. Transcriptional repressor which coordinates circadian rhythm and metabolic pathways in a heme-dependent manner. Integral component of the complex transcription machinery that governs circadian rhythmicity and forms a critical negative limb of the circadian clock by directly repressing the expression of core clock components BMAL1, CLOCK and CRY1. Also regulates genes involved in metabolic functions, including lipid and bile acid metabolism, adipogenesis, gluconeogenesis and the macrophage inflammatory response. Acts as a receptor for heme which stimulates its interaction with the NCOR1/HDAC3 corepressor complex, enhancing transcriptional repression. Recognizes two classes of DNA response elements within the promoter of its target genes and can bind to DNA as either monomers or homodimers, depending on the nature of the response element. Binds as a monomer to a response element composed of the consensus half-site motif 5'-[A/G]GGTCA-3' preceded by an A/T-rich 5' sequence (RevRE), or as a homodimer to a direct repeat of the core motif spaced by two nucleotides (RevDR-2). Acts as a potent competitive repressor of ROR alpha (RORA) function and regulates the levels of its ligand heme by repressing the expression of PPARGC1A, a potent inducer of heme synthesis. Regulates lipid metabolism by repressing the expression of APOC3 and by influencing the activity of sterol response element binding proteins (SREBPs); represses INSIG2 which interferes with the proteolytic activation of SREBPs which in turn govern the rhythmic expression of enzymes with key functions in sterol and fatty acid synthesis. Regulates gluconeogenesis via repression of G6PC1 and PEPCK and adipocyte differentiation via repression of PPARG. Regulates glucagon release in pancreatic alpha-cells via the AMPK-NAMPT-SIRT1 pathway and the proliferation, glucose-induced insulin secretion and expression of key lipogenic genes in pancreatic-beta cells. Positively regulates bile acid synthesis by increasing hepatic expression of CYP7A1 via repression of NR0B2 and NFIL3 which are negative regulators of CYP7A1. Modulates skeletal muscle oxidative capacity by regulating mitochondrial biogenesis and autophagy; controls mitochondrial biogenesis and respiration by interfering with the STK11-PRKAA1/2-SIRT1-PPARGC1A signaling pathway. Represses the expression of SERPINE1/PAI1, an important modulator of cardiovascular disease and the expression of inflammatory cytokines and chemokines in macrophages. Represses gene expression at a distance in macrophages by inhibiting the transcription of enhancer-derived RNAs (eRNAs). Plays a role in the circadian regulation of body temperature and negatively regulates thermogenic transcriptional programs in brown adipose tissue (BAT); imposes a circadian oscillation in BAT activity, increasing body temperature when awake and depressing thermogenesis during sleep. In concert with NR2E3, regulates transcriptional networks critical for photoreceptor development and function. In addition to its activity as a repressor, can also act as a transcriptional activator. In the ovarian granulosa cells acts as a transcriptional activator of STAR which plays a role in steroid biosynthesis. In collaboration with SP1, activates GJA1 transcription in a heme-independent manner. Represses the transcription of CYP2B10, CYP4A10 and CYP4A14. Represses the transcription of CES2. Represses and regulates the circadian expression of TSHB in a NCOR1-dependent manner. Negatively regulates the protein stability of NR3C1 and influences the time-dependent subcellular distribution of NR3C1, thereby affecting its transcriptional regulatory activity. Plays a critical role in the circadian control of neutrophilic inflammation in the lung; under resting, non-stress conditions, acts as a rhythmic repressor to limit inflammatory activity whereas in the presence of inflammatory triggers undergoes ubiquitin-mediated degradation thereby relieving inhibition of the inflammatory response. Plays a key role in the circadian regulation of microglial activation and neuroinflammation; suppresses microglial activation through the NF-kappaB pathway in the central nervous system. Plays a role in the regulation of the diurnal rhythms of lipid and protein metabolism in the skeletal muscle via transcriptional repression of genes controlling lipid and amino acid metabolism in the muscle. In Ovis aries (Sheep), this protein is Nuclear receptor subfamily 1 group D member 1 (NR1D1).